A 699-amino-acid chain; its full sequence is DNA topoisomerase 1 (699 aa).

Basic and acidic residues-rich tracts occupy residues 1–15 and 22–35; these read MAKS…KNEL and IELK…ESKG. The interval 1–37 is disordered; it reads MAKSKVVEKDKKNELDNQSADIELKGQSKNEESKGGK. Residues 38 to 146 enclose the Toprim domain; that stretch reads KKVIIVESPA…NIITFTEITE (109 aa). Mg(2+) is bound by residues E44 and D115. The Topo IA-type catalytic domain occupies 160 to 583; the sequence is DMNKVNAQLA…SFLKEFNKDL (424 aa). The interaction with DNA stretch occupies residues 194-199; it reads SAGRVQ. Catalysis depends on Y324, which acts as the O-(5'-phospho-DNA)-tyrosine intermediate. The segment at 601-624 adopts a C4-type zinc-finger fold; the sequence is CEDCSGNYKLKVGKYGLYLHCPNC. Residues 649-699 form a disordered region; sequence QESQEENGEKNSVQSEESSANSGNRKFYRKRRTSGSKKSSTKSASSKAKKK. The span at 661-672 shows a compositional bias: polar residues; sequence VQSEESSANSGN. Over residues 674–683 the composition is skewed to basic residues; sequence KFYRKRRTSG. The span at 684–699 shows a compositional bias: low complexity; sequence SKKSSTKSASSKAKKK.

Belongs to the type IA topoisomerase family. In terms of assembly, monomer. Requires Mg(2+) as cofactor.

It catalyses the reaction ATP-independent breakage of single-stranded DNA, followed by passage and rejoining.. Releases the supercoiling and torsional tension of DNA, which is introduced during the DNA replication and transcription, by transiently cleaving and rejoining one strand of the DNA duplex. Introduces a single-strand break via transesterification at a target site in duplex DNA. The scissile phosphodiester is attacked by the catalytic tyrosine of the enzyme, resulting in the formation of a DNA-(5'-phosphotyrosyl)-enzyme intermediate and the expulsion of a 3'-OH DNA strand. The free DNA strand then undergoes passage around the unbroken strand, thus removing DNA supercoils. Finally, in the religation step, the DNA 3'-OH attacks the covalent intermediate to expel the active-site tyrosine and restore the DNA phosphodiester backbone. In Fervidobacterium islandicum, this protein is DNA topoisomerase 1.